Consider the following 297-residue polypeptide: Acetylglutamate kinase (297 aa).

Residues 70-71 (GG), R92, and N194 each bind substrate.

Belongs to the acetylglutamate kinase family. ArgB subfamily.

The protein resides in the cytoplasm. The enzyme catalyses N-acetyl-L-glutamate + ATP = N-acetyl-L-glutamyl 5-phosphate + ADP. The protein operates within amino-acid biosynthesis; L-arginine biosynthesis; N(2)-acetyl-L-ornithine from L-glutamate: step 2/4. In terms of biological role, catalyzes the ATP-dependent phosphorylation of N-acetyl-L-glutamate. This chain is Acetylglutamate kinase, found in Janthinobacterium sp. (strain Marseille) (Minibacterium massiliensis).